Here is a 389-residue protein sequence, read N- to C-terminus: (+)-bicyclogermacrene synthase TS4 (389 aa).

Positions 136, 140, 284, 288, and 292 each coordinate Mg(2+). A DDxx(x)D/E motif motif is present at residues 136 to 140 (DEVCE). Positions 284–292 (HDFIGLQKD) match the NDxxSxxxD/E motif motif.

The protein belongs to the terpene synthase family.

The catalysed reaction is (2E,6E)-farnesyl diphosphate = bicyclogermacrene + diphosphate. In terms of biological role, catalyzes the cyclization of trans,trans-farnesyl diphosphate (FPP) to the bicyclic sesquiterpene bicyclogermacrene. This chain is (+)-bicyclogermacrene synthase TS4, found in Penicillium expansum (Blue mold rot fungus).